Consider the following 567-residue polypeptide: uncharacterized protein (567 aa).

At 1 to 31 (MLDTILINVFRRDGDDDDDDGQDPALQELYS) the chain is on the lumenal side. A helical transmembrane segment spans residues 32 to 52 (SWALFILLVLLIGALLTSYYV). The Cytoplasmic segment spans residues 53–64 (QSKKIRAIHETV). The chain crosses the membrane as a helical span at residues 65–85 (ISVFVGMVVGLIIRVSPGLII). The Lumenal segment spans residues 86–87 (QN). A helical membrane pass occupies residues 88-108 (MVSFHSTYFFNVLLPPIILNS). Residues 109-128 (GYELHQSNFFRNIGTILTFA) are Cytoplasmic-facing. The helical transmembrane segment at 129–149 (FAGTFISAVTLGVLVYIFSFL) threads the bilayer. The Lumenal segment spans residues 150-159 (NFENLSMTFV). The chain crosses the membrane as a helical span at residues 160–180 (EALSMGATLSATDPVTVLAIF). At 181-188 (NSYKVDQK) the chain is on the cytoplasmic side. The helical transmembrane segment at 189–209 (LYTIIFGESILNDAVAIVMFE) threads the bilayer. Residues 210–227 (TLQQFQGKTLHFFTLFSG) lie on the Lumenal side of the membrane. Residues 228 to 248 (IGIFIITFFISLLIGVSIGLI) traverse the membrane as a helical segment. Over 249-277 (TALLLKYSYLRRYPSIESCIILLMAYTSY) the chain is Cytoplasmic. The helical transmembrane segment at 278-298 (FFSNGCHMSGVVSLLFCGITL) threads the bilayer. Residues 299-315 (KHYAFFNMSYKAKLSTK) lie on the Lumenal side of the membrane. The helical transmembrane segment at 316–338 (YVFRVLAQLSENFIFIYLGMSLF) threads the bilayer. Over 339-347 (TQVDLVYKP) the chain is Cytoplasmic. A helical transmembrane segment spans residues 348–366 (IFILITTVAVTASRYMNVF). Residues 367–392 (PLSNLLNKFHRQRNGNLIDHIPYSYQ) are Lumenal-facing. Residues 393-413 (MMLFWAGLRGAVGVALAAGFE) traverse the membrane as a helical segment. Over 414–424 (GENAQTLRATT) the chain is Cytoplasmic. Residues 425–445 (LVVVVLTLIIFGGTTARMLEI) form a helical membrane-spanning segment. Residues 446–567 (LHIETGVAAD…RDNLKNGTKK (122 aa)) are Lumenal-facing. At Ser515 the chain carries Phosphoserine.

The protein belongs to the monovalent cation:proton antiporter 1 (CPA1) transporter (TC 2.A.36) family.

Its subcellular location is the golgi apparatus membrane. This is an uncharacterized protein from Schizosaccharomyces pombe (strain 972 / ATCC 24843) (Fission yeast).